The primary structure comprises 395 residues: Endophilin-B2 (395 aa).

At methionine 1 the chain carries N-acetylmethionine. A membrane-binding amphipathic helix region spans residues 1-27 (MDFNMKKLASDAGIFFTRAVQFTEEKF). The residue at position 10 (serine 10) is a Phosphoserine. The BAR domain maps to 24-287 (EEKFGQAEKT…LGRFPGTFVG (264 aa)). 2 coiled-coil regions span residues 116–132 (IKVA…ERDF) and 206–240 (ASAL…LLLE). Residues 335–395 (SGTRKARVLY…VPVTYLELLS (61 aa)) form the SH3 domain. Position 395 is a phosphoserine (serine 395).

It belongs to the endophilin family. In terms of assembly, homodimer, and heterodimer with SH3GLB1.

The protein resides in the cytoplasm. This chain is Endophilin-B2 (SH3GLB2), found in Bos taurus (Bovine).